Reading from the N-terminus, the 241-residue chain is ATP synthase subunit a (241 aa).

5 consecutive transmembrane segments (helical) span residues 30–50 (GQVFLTSWILLGSLLVFISLG), 91–111 (FIGTLFLFVFVSNWGGALIPW), 128–148 (INTTIALALLVSLSYFYAGLS), 193–213 (LVVGVLVFLVPLVLPIPVMFL), and 214–234 (GLFTSAIQALIFATLAAYYIG).

It belongs to the ATPase A chain family. In terms of assembly, F-type ATPases have 2 components, CF(1) - the catalytic core - and CF(0) - the membrane proton channel. CF(1) has five subunits: alpha(3), beta(3), gamma(1), delta(1), epsilon(1). CF(0) has four main subunits: a, b, b' and c.

Its subcellular location is the cellular thylakoid membrane. Key component of the proton channel; it plays a direct role in the translocation of protons across the membrane. The chain is ATP synthase subunit a from Prochlorococcus marinus (strain MIT 9515).